Consider the following 103-residue polypeptide: Pyrimidine/purine nucleoside phosphorylase (103 aa).

The protein belongs to the nucleoside phosphorylase PpnP family.

It catalyses the reaction a purine D-ribonucleoside + phosphate = a purine nucleobase + alpha-D-ribose 1-phosphate. The enzyme catalyses adenosine + phosphate = alpha-D-ribose 1-phosphate + adenine. It carries out the reaction cytidine + phosphate = cytosine + alpha-D-ribose 1-phosphate. The catalysed reaction is guanosine + phosphate = alpha-D-ribose 1-phosphate + guanine. It catalyses the reaction inosine + phosphate = alpha-D-ribose 1-phosphate + hypoxanthine. The enzyme catalyses thymidine + phosphate = 2-deoxy-alpha-D-ribose 1-phosphate + thymine. It carries out the reaction uridine + phosphate = alpha-D-ribose 1-phosphate + uracil. The catalysed reaction is xanthosine + phosphate = alpha-D-ribose 1-phosphate + xanthine. In terms of biological role, catalyzes the phosphorolysis of diverse nucleosides, yielding D-ribose 1-phosphate and the respective free bases. Can use uridine, adenosine, guanosine, cytidine, thymidine, inosine and xanthosine as substrates. Also catalyzes the reverse reactions. The chain is Pyrimidine/purine nucleoside phosphorylase from Shewanella baltica (strain OS223).